We begin with the raw amino-acid sequence, 274 residues long: Long chain fatty acid elongase 6 (274 aa).

Topologically, residues 1–30 are extracellular; the sequence is MPQGEVSFFEVLTTAPFSHELSKKHIAQTQ. A helical transmembrane segment spans residues 31–51; it reads YAAFWISMAYVVVIFGLKAVM. The Cytoplasmic segment spans residues 52–69; that stretch reads TNRKPFDLTGPLNLWNAG. The helical transmembrane segment at 70 to 90 threads the bilayer; sequence LAIFSTLGSLATTFGLLHEFF. Over 91–111 the chain is Extracellular; the sequence is SRGFFESYIHIGDFYNGLSGM. Residues 112–132 traverse the membrane as a helical segment; the sequence is FTWLFVLSKVAEFGDTLFIIL. Residues 133–135 lie on the Cytoplasmic side of the membrane; sequence RKK. Residues 136–156 traverse the membrane as a helical segment; that stretch reads PLMFLHWYHHVLTMNYAFMSF. At 157-159 the chain is on the extracellular side; sequence EAN. The helical transmembrane segment at 160 to 180 threads the bilayer; the sequence is LGFNTWITWMNFSVHSIMYGY. At 181–202 the chain is on the cytoplasmic side; that stretch reads YMLRSFGVKVPAWIAKNITTMQ. The helical transmembrane segment at 203–223 threads the bilayer; it reads ILQFVITHFILFHVGYLAVTG. At 224–230 the chain is on the extracellular side; that stretch reads QSVDSTP. Residues 231-251 traverse the membrane as a helical segment; the sequence is GYYWFCLLMEISYVVLFGNFY. Residues 252 to 274 are Cytoplasmic-facing; that stretch reads YQSYIKGGGKKFNAEKKTEKKIE.

It belongs to the ELO family. In terms of tissue distribution, expressed in the gut, neurons, pharynx and muscles of the vulva.

The protein localises to the membrane. It catalyses the reaction isopentadecanoyl-CoA + malonyl-CoA + H(+) = 3-oxoisoheptadecanoyl-CoA + CO2 + CoA. Its pathway is lipid metabolism; fatty acid biosynthesis. Catalyzes the first and rate-limiting reaction of the four reactions that constitute the long-chain fatty acids elongation cycle. Uses malonyl-CoA to add 2 carbons per cycle to the chain of long-chain fatty acids. Condensing enzyme required for the formation of isoheptadecanoate (C17iso), which plays critical roles in animal development and growth. This chain is Long chain fatty acid elongase 6 (elo-6), found in Caenorhabditis elegans.